A 202-amino-acid polypeptide reads, in one-letter code: Putative 3-methyladenine DNA glycosylase (202 aa).

This sequence belongs to the DNA glycosylase MPG family.

In Alkaliphilus oremlandii (strain OhILAs) (Clostridium oremlandii (strain OhILAs)), this protein is Putative 3-methyladenine DNA glycosylase.